Here is a 348-residue protein sequence, read N- to C-terminus: 4-hydroxy-2-oxovalerate aldolase 3 (348 aa).

A Pyruvate carboxyltransferase domain is found at 8–260 (ITVHDMTLRD…ETGVDVWKIQ (253 aa)). Residue 16 to 17 (RD) coordinates substrate. Asp17 contributes to the Mn(2+) binding site. Residue His20 is the Proton acceptor of the active site. Substrate-binding residues include Ser170 and His199. Mn(2+)-binding residues include His199 and His201. Tyr290 contributes to the substrate binding site.

It belongs to the 4-hydroxy-2-oxovalerate aldolase family.

The enzyme catalyses (S)-4-hydroxy-2-oxopentanoate = acetaldehyde + pyruvate. This is 4-hydroxy-2-oxovalerate aldolase 3 from Burkholderia lata (strain ATCC 17760 / DSM 23089 / LMG 22485 / NCIMB 9086 / R18194 / 383).